Here is a 313-residue protein sequence, read N- to C-terminus: Formimidoylglutamase (313 aa).

The Mn(2+) site is built by histidine 130, aspartate 155, histidine 157, aspartate 159, aspartate 241, and aspartate 243.

The protein belongs to the arginase family. It depends on Mn(2+) as a cofactor.

It carries out the reaction N-formimidoyl-L-glutamate + H2O = formamide + L-glutamate. It functions in the pathway amino-acid degradation; L-histidine degradation into L-glutamate; L-glutamate from N-formimidoyl-L-glutamate (hydrolase route): step 1/1. In terms of biological role, catalyzes the conversion of N-formimidoyl-L-glutamate to L-glutamate and formamide. In Citrobacter koseri (strain ATCC BAA-895 / CDC 4225-83 / SGSC4696), this protein is Formimidoylglutamase.